The chain runs to 606 residues: Chaperone protein DnaK (606 aa).

Residue Thr174 is modified to Phosphothreonine; by autocatalysis. Residues 579–593 (ASAAGNPGQGQTNEN) show a composition bias toward polar residues. The interval 579-606 (ASAAGNPGQGQTNENPGGKTIDGDYKVN) is disordered.

The protein belongs to the heat shock protein 70 family.

Functionally, acts as a chaperone. The protein is Chaperone protein DnaK of Dictyoglomus thermophilum (strain ATCC 35947 / DSM 3960 / H-6-12).